Consider the following 414-residue polypeptide: Enterobactin exporter EntS (414 aa).

The Cytoplasmic segment spans residues 1–21 (MNRQSWLLNLSLLKTHPAFRA). Residues 22–42 (VFLARFISIVSLGLLGVAVPV) form a helical membrane-spanning segment. Residues 43 to 55 (QIQMMTHSTWQVG) are Periplasmic-facing. The chain crosses the membrane as a helical span at residues 56–76 (LSVTLTGGAMFIGLMVGGVLA). Residues 77 to 83 (DRYERKK) are Cytoplasmic-facing. A helical membrane pass occupies residues 84-104 (VILLARGTCGIGFIGLCVNAL). Residues 105–109 (LPEPS) lie on the Periplasmic side of the membrane. Residues 110 to 130 (LLAIYLLGLWDGFFASLGVTA) form a helical membrane-spanning segment. Residues 131-156 (LLAATPALVGRENLMQAGAITMLTVR) are Cytoplasmic-facing. A helical membrane pass occupies residues 157 to 177 (LGSVISPMLGGILLASGGVAW). Residue Asn178 is a topological domain, periplasmic. The helical transmembrane segment at 179–199 (YGLAAAGTFITLLPLLTLPRL) threads the bilayer. At 200–218 (PVPPQPRENPFIALLAAFR) the chain is on the cytoplasmic side. Residues 219-239 (FLLASPLIGGIALLGGLVTMA) traverse the membrane as a helical segment. Residues 240 to 256 (SAVRVLYPALAMSWQMS) are Periplasmic-facing. The helical transmembrane segment at 257–277 (AAQIGLLYAAIPLGAAIGALT) threads the bilayer. Residues 278–287 (SGQLAHSVRP) lie on the Cytoplasmic side of the membrane. The helical transmembrane segment at 288–307 (GLIMLVSTVGSFLAVGLFAI) threads the bilayer. At 308–313 (MPIWIA) the chain is on the periplasmic side. Residues 314–336 (GVICLALFGWLSAISSLLQYTLL) traverse the membrane as a helical segment. Residues 337–356 (QTQTPENMLGRMNGLWTAQN) lie on the Cytoplasmic side of the membrane. Residues 357–377 (VTGDAIGAALLGGLGAMMTPV) traverse the membrane as a helical segment. Ala378 is a topological domain (periplasmic). The chain crosses the membrane as a helical span at residues 379-399 (SASVSGFGLVIIGLLLLLVLG). Residues 400 to 414 (ELRRFRQTPPVSDAG) are Cytoplasmic-facing.

The protein belongs to the major facilitator superfamily. EntS (TC 2.A.1.38) family.

The protein localises to the cell inner membrane. Component of an export pathway for enterobactin. The polypeptide is Enterobactin exporter EntS (Salmonella typhi).